The sequence spans 616 residues: Hemagglutinin-neuraminidase (616 aa).

The Intravirion portion of the chain corresponds to 1–26; it reads MDRAVSQVALENDEREAKNTWRLVFR. The chain crosses the membrane as a helical span at residues 27–47; it reads IAILLLTVVTLAISAAALAYS. At 48–616 the chain is on the virion surface side; sequence MEASTPSDLI…ELESYAASWP (569 aa). N-linked (GlcNAc...) asparagine; by host glycosylation occurs at Asn-119. The interval 124 to 152 is important for interaction with fusion/F protein; the sequence is GAPIHDPDYIGGIGKELIVDDASDVTSFY. Cystine bridges form between Cys-172-Cys-196, Cys-186-Cys-247, and Cys-238-Cys-251. The segment at 234–239 is involved in neuraminidase activity; that stretch reads NRKSCS. N-linked (GlcNAc...) asparagine; by host glycosylation is found at Asn-341 and Asn-433. Disulfide bonds link Cys-344/Cys-461 and Cys-455/Cys-465. Residues Asn-481, Asn-538, and Asn-600 are each glycosylated (N-linked (GlcNAc...) asparagine; by host). Cysteines 531 and 542 form a disulfide.

The protein belongs to the paramyxoviruses hemagglutinin-neuraminidase family. Homotetramer; composed of disulfide-linked homodimers. Interacts with F protein trimer. Interacts with host CG-1B; this interaction inhibits viral adsorption and replication rather than internalization.

The protein resides in the virion membrane. Its subcellular location is the host cell membrane. The enzyme catalyses Hydrolysis of alpha-(2-&gt;3)-, alpha-(2-&gt;6)-, alpha-(2-&gt;8)- glycosidic linkages of terminal sialic acid residues in oligosaccharides, glycoproteins, glycolipids, colominic acid and synthetic substrates.. Its function is as follows. Mediates the viral entry into the host cell together with fusion/F protein. Attaches the virus to sialic acid-containing cell receptors and thereby initiates infection. Binding of HN protein to the receptor induces a conformational change that allows the F protein to trigger virion/cell membranes fusion. In terms of biological role, neuraminidase activity ensures the efficient spread of the virus by dissociating the mature virions from the neuraminic acid containing glycoproteins. This Newcastle disease virus (strain Chicken/Northern Ireland/Ulster/67) (NDV) protein is Hemagglutinin-neuraminidase (HN).